A 171-amino-acid polypeptide reads, in one-letter code: 3-hydroxydecanoyl-[acyl-carrier-protein] dehydratase (171 aa).

Residue histidine 70 is part of the active site.

The protein belongs to the thioester dehydratase family. FabA subfamily. As to quaternary structure, homodimer.

It localises to the cytoplasm. It carries out the reaction a (3R)-hydroxyacyl-[ACP] = a (2E)-enoyl-[ACP] + H2O. The enzyme catalyses (3R)-hydroxydecanoyl-[ACP] = (2E)-decenoyl-[ACP] + H2O. It catalyses the reaction (2E)-decenoyl-[ACP] = (3Z)-decenoyl-[ACP]. The protein operates within lipid metabolism; fatty acid biosynthesis. In terms of biological role, necessary for the introduction of cis unsaturation into fatty acids. Catalyzes the dehydration of (3R)-3-hydroxydecanoyl-ACP to E-(2)-decenoyl-ACP and then its isomerization to Z-(3)-decenoyl-ACP. Can catalyze the dehydratase reaction for beta-hydroxyacyl-ACPs with saturated chain lengths up to 16:0, being most active on intermediate chain length. The chain is 3-hydroxydecanoyl-[acyl-carrier-protein] dehydratase from Xanthomonas axonopodis pv. citri (strain 306).